Reading from the N-terminus, the 839-residue chain is Phosphatidylinositol-glycan-specific phospholipase D (839 aa).

An N-terminal signal peptide occupies residues 1-23 (MSAFRFWSGLLMLLGFLCPRSSP). N-linked (GlcNAc...) asparagine glycans are attached at residues asparagine 94, asparagine 271, asparagine 292, asparagine 307, and asparagine 321. FG-GAP repeat units lie at residues 365–427 (SSPA…GLPR), 434–496 (KEAH…GQLS), 498–558 (SPNV…YSSR), 562–622 (NVEA…SPGR), 632–692 (QSWF…GSTR), 703–769 (SLLS…TVGD), and 787–839 (QYVL…LGQD). N-linked (GlcNAc...) asparagine glycosylation is found at asparagine 500, asparagine 590, and asparagine 658.

This sequence belongs to the GPLD1 family. Monomer. In terms of processing, glycosylated.

It localises to the secreted. The catalysed reaction is a 6-(alpha-D-glucosaminyl)-1-(1,2-diacyl-sn-glycero-3-phospho)-1D-myo-inositol + H2O = 6-(alpha-D-glucosaminyl)-1D-myo-inositol + a 1,2-diacyl-sn-glycero-3-phosphate + H(+). In terms of biological role, this protein hydrolyzes the inositol phosphate linkage in proteins anchored by phosphatidylinositol glycans (GPI-anchor) thus releasing these proteins from the membrane. This Bos taurus (Bovine) protein is Phosphatidylinositol-glycan-specific phospholipase D (GPLD1).